A 295-amino-acid polypeptide reads, in one-letter code: Indole-3-glycerol phosphate synthase (295 aa).

It belongs to the TrpC family.

It catalyses the reaction 1-(2-carboxyphenylamino)-1-deoxy-D-ribulose 5-phosphate + H(+) = (1S,2R)-1-C-(indol-3-yl)glycerol 3-phosphate + CO2 + H2O. It participates in amino-acid biosynthesis; L-tryptophan biosynthesis; L-tryptophan from chorismate: step 4/5. This chain is Indole-3-glycerol phosphate synthase, found in Prochlorococcus marinus (strain MIT 9211).